The following is a 192-amino-acid chain: dCTP deaminase, dUMP-forming (192 aa).

DCTP-binding positions include 101–106 (KSSLGR), Asp-119, 127–129 (TLE), Gln-148, Tyr-162, and Gln-174. Glu-129 acts as the Proton donor/acceptor in catalysis. The disordered stretch occupies residues 169–192 (SRYQGQRGPTPSRSWQSWRTWPTR). A compositionally biased stretch (polar residues) spans 171-192 (YQGQRGPTPSRSWQSWRTWPTR).

The protein belongs to the dCTP deaminase family. As to quaternary structure, homotrimer.

It catalyses the reaction dCTP + 2 H2O = dUMP + NH4(+) + diphosphate. Its pathway is pyrimidine metabolism; dUMP biosynthesis; dUMP from dCTP: step 1/1. In terms of biological role, bifunctional enzyme that catalyzes both the deamination of dCTP to dUTP and the hydrolysis of dUTP to dUMP without releasing the toxic dUTP intermediate. The polypeptide is dCTP deaminase, dUMP-forming (Salinispora tropica (strain ATCC BAA-916 / DSM 44818 / JCM 13857 / NBRC 105044 / CNB-440)).